Reading from the N-terminus, the 534-residue chain is Beta-glucosidase 31 (534 aa).

The N-terminal stretch at 1–22 (MAIKLIALVITLCVASWDVAQG) is a signal peptide. A beta-D-glucoside is bound at residue Q51. N68 carries an N-linked (GlcNAc...) asparagine glycan. A beta-D-glucoside contacts are provided by residues H154 and 199–200 (NE). E200 acts as the Proton donor in catalysis. The cysteines at positions 219 and 227 are disulfide-linked. Y344 contributes to the a beta-D-glucoside binding site. N374 is a glycosylation site (N-linked (GlcNAc...) asparagine). E417 contributes to the a beta-D-glucoside binding site. Catalysis depends on E417, which acts as the Nucleophile. N425 carries N-linked (GlcNAc...) asparagine glycosylation. A beta-D-glucoside-binding positions include W467, 474–475 (EW), and F483.

Belongs to the glycosyl hydrolase 1 family.

The catalysed reaction is Hydrolysis of terminal, non-reducing beta-D-glucosyl residues with release of beta-D-glucose.. The polypeptide is Beta-glucosidase 31 (Arabidopsis thaliana (Mouse-ear cress)).